Consider the following 116-residue polypeptide: Evasin P1180 (116 aa).

A signal peptide spans 1–25; it reads MARNWSFRVIFVSAMWCALLKFATL. 4 disulfide bridges follow: Cys38–Cys58, Cys54–Cys95, Cys71–Cys100, and Cys90–Cys109. Asn45, Asn73, and Asn104 each carry an N-linked (GlcNAc...) asparagine glycan.

Its subcellular location is the secreted. Salivary chemokine-binding protein which binds to host chemokines CCL2, CCL3, CCL4, CCL8 and CCL18. This chain is Evasin P1180, found in Amblyomma triste (Neotropical tick).